Reading from the N-terminus, the 204-residue chain is Holliday junction branch migration complex subunit RuvA (204 aa).

The domain I stretch occupies residues 1–64 (MIGRLQGILL…EDAHLLFGFA (64 aa)). The tract at residues 65–143 (QKTDRTLFRE…GVKQSDFFVE (79 aa)) is domain II. Positions 144–155 (STHIPLSPSIES) are flexible linker. The domain III stretch occupies residues 156 to 204 (HSESSSDEAISALIALGYKPVEAEKMVKRVAKPELTSEQVIREALKVAL).

It belongs to the RuvA family. In terms of assembly, homotetramer. Forms an RuvA(8)-RuvB(12)-Holliday junction (HJ) complex. HJ DNA is sandwiched between 2 RuvA tetramers; dsDNA enters through RuvA and exits via RuvB. An RuvB hexamer assembles on each DNA strand where it exits the tetramer. Each RuvB hexamer is contacted by two RuvA subunits (via domain III) on 2 adjacent RuvB subunits; this complex drives branch migration. In the full resolvosome a probable DNA-RuvA(4)-RuvB(12)-RuvC(2) complex forms which resolves the HJ.

It localises to the cytoplasm. The RuvA-RuvB-RuvC complex processes Holliday junction (HJ) DNA during genetic recombination and DNA repair, while the RuvA-RuvB complex plays an important role in the rescue of blocked DNA replication forks via replication fork reversal (RFR). RuvA specifically binds to HJ cruciform DNA, conferring on it an open structure. The RuvB hexamer acts as an ATP-dependent pump, pulling dsDNA into and through the RuvAB complex. HJ branch migration allows RuvC to scan DNA until it finds its consensus sequence, where it cleaves and resolves the cruciform DNA. The polypeptide is Holliday junction branch migration complex subunit RuvA (Haemophilus influenzae (strain ATCC 51907 / DSM 11121 / KW20 / Rd)).